A 1058-amino-acid chain; its full sequence is Lon protease homolog, mitochondrial (1058 aa).

The N-terminal 47 residues, 1–47 (MLTRIRNAGVGGNAARRVRLLAGYTGARMAHAAALNSTTGAGGAARA), are a transit peptide targeting the mitochondrion. A disordered region spans residues 72 to 151 (GGQCILKQDR…RSNPPSEGEV (80 aa)). Composition is skewed to basic and acidic residues over residues 78 to 97 (KQDR…RAEE) and 106 to 118 (DEEA…EEQA). The span at 129–142 (GSGGSASSAGGGGR) shows a compositional bias: gly residues. In terms of domain architecture, Lon N-terminal spans 158–412 (LMVLPMSNRP…KALVFIKKEV (255 aa)). 564–571 (GPPGVGKT) contacts ATP. Positions 778 to 814 (TPKSAPAETNIEPENGKPDASAKPLTNNLPAPEPLNI) are disordered. The region spanning 844–1030 (KTPAGVVMGL…DDVFNVLFGS (187 aa)) is the Lon proteolytic domain. Catalysis depends on residues Ser-936 and Lys-979.

Belongs to the peptidase S16 family. As to quaternary structure, homohexamer or homoheptamer. Organized in a ring with a central cavity.

Its subcellular location is the mitochondrion matrix. The enzyme catalyses Hydrolysis of proteins in presence of ATP.. In terms of biological role, ATP-dependent serine protease that mediates the selective degradation of misfolded, unassembled or oxidatively damaged polypeptides as well as certain short-lived regulatory proteins in the mitochondrial matrix. May also have a chaperone function in the assembly of inner membrane protein complexes. Participates in the regulation of mitochondrial gene expression and in the maintenance of the integrity of the mitochondrial genome. Binds to mitochondrial DNA in a site-specific manner. This Eremothecium gossypii (strain ATCC 10895 / CBS 109.51 / FGSC 9923 / NRRL Y-1056) (Yeast) protein is Lon protease homolog, mitochondrial.